A 146-amino-acid chain; its full sequence is ATP synthase epsilon chain (146 aa).

Positions 103-122 (SAKKRAEQHMQEAKEKHNER) are disordered.

This sequence belongs to the ATPase epsilon chain family. F-type ATPases have 2 components, CF(1) - the catalytic core - and CF(0) - the membrane proton channel. CF(1) has five subunits: alpha(3), beta(3), gamma(1), delta(1), epsilon(1). CF(0) has three main subunits: a, b and c.

It is found in the cell membrane. In terms of biological role, produces ATP from ADP in the presence of a proton gradient across the membrane. The chain is ATP synthase epsilon chain from Lactobacillus johnsonii (strain CNCM I-12250 / La1 / NCC 533).